The chain runs to 503 residues: Glutamate--tRNA ligase (503 aa).

The short motif at 15–25 (PSPTGHLHVGG) is the 'HIGH' region element. The 'KMSKS' region motif lies at 262–266 (KLSKR). An ATP-binding site is contributed by Lys265.

This sequence belongs to the class-I aminoacyl-tRNA synthetase family. Glutamate--tRNA ligase type 1 subfamily. In terms of assembly, monomer.

The protein resides in the cytoplasm. It catalyses the reaction tRNA(Glu) + L-glutamate + ATP = L-glutamyl-tRNA(Glu) + AMP + diphosphate. Functionally, catalyzes the attachment of glutamate to tRNA(Glu) in a two-step reaction: glutamate is first activated by ATP to form Glu-AMP and then transferred to the acceptor end of tRNA(Glu). In Chlorobium phaeobacteroides (strain BS1), this protein is Glutamate--tRNA ligase.